The following is a 79-amino-acid chain: MAGGRRGGRAKRRKVCYFTSNGITHIDYKDVDLLRKFISERGKILPRRVTGTSAKYQRKLTVAIKRARQMALLPYVAGE.

It belongs to the bacterial ribosomal protein bS18 family. As to quaternary structure, part of the 30S ribosomal subunit. Forms a tight heterodimer with protein bS6.

In terms of biological role, binds as a heterodimer with protein bS6 to the central domain of the 16S rRNA, where it helps stabilize the platform of the 30S subunit. The chain is Small ribosomal subunit protein bS18 from Bacillus licheniformis (strain ATCC 14580 / DSM 13 / JCM 2505 / CCUG 7422 / NBRC 12200 / NCIMB 9375 / NCTC 10341 / NRRL NRS-1264 / Gibson 46).